Reading from the N-terminus, the 172-residue chain is HAD-like hydrolase superfamily protein P8B7.31 (172 aa).

Aspartate 14 serves as the catalytic Nucleophile. 3 residues coordinate Mg(2+): aspartate 14, aspartate 16, and aspartate 137. Residue aspartate 16 is the Proton donor of the active site.

Belongs to the HAD-like hydrolase superfamily.

Its subcellular location is the cytoplasm. It is found in the nucleus. This is HAD-like hydrolase superfamily protein P8B7.31 from Schizosaccharomyces pombe (strain 972 / ATCC 24843) (Fission yeast).